The chain runs to 250 residues: uncharacterized protein (250 aa).

The signal sequence occupies residues 1–24 (MKGFLKPNFSLGALFLTLSPIATA). A lipid anchor (N-palmitoyl cysteine) is attached at Cys25. A lipid anchor (S-diacylglycerol cysteine) is attached at Cys25. One can recognise a TNase-like domain in the interval 44–200 (RLRKARVNHW…FNNRKNIFSY (157 aa)).

The protein resides in the cell membrane. This is an uncharacterized protein from Mycoplasma genitalium (strain ATCC 33530 / DSM 19775 / NCTC 10195 / G37) (Mycoplasmoides genitalium).